The following is a 309-amino-acid chain: MKLVLFLNMGGATNLQDCEVFLKNMFNDPYILGIKNRFLRKFVAWIITKARVKAMQENYKKMGGKSPLNELTQSLCNKLNLKQDEFKFDFVNLYVPPFATEILQKYTLNESDEIILFPLYPHHSCTTVTSSLEVLQNEISKQKIQAKVKTIDIFYKNELYNEMIVSHILDKKSKFDAKILIFSAHSLPQSIIDKGDLYEKHVNDHVEILKEKLKDHFDEFILAYQSKLGPVKWLEPNTSDVLANLNDKALIYPISFCIDCSETIFELGMEYKHLAKCDYDLISCPNDSDEFMEFILNSINSPLARKTSC.

2 residues coordinate Fe cation: histidine 185 and glutamate 262.

Belongs to the ferrochelatase family.

The protein localises to the cytoplasm. It catalyses the reaction heme b + 2 H(+) = protoporphyrin IX + Fe(2+). Its pathway is porphyrin-containing compound metabolism; protoheme biosynthesis; protoheme from protoporphyrin-IX: step 1/1. In terms of biological role, catalyzes the ferrous insertion into protoporphyrin IX. The protein is Ferrochelatase of Campylobacter jejuni subsp. jejuni serotype O:23/36 (strain 81-176).